The chain runs to 338 residues: Formamidase (338 aa).

One can recognise a CN hydrolase domain in the interval 15–257; that stretch reads VVIGLAQLAL…DEIVCCELRP (243 aa). Catalysis depends on E61, which acts as the Proton acceptor. The active-site Proton donor is K130. C163 serves as the catalytic Nucleophile.

Belongs to the carbon-nitrogen hydrolase superfamily. Aliphatic amidase family.

The catalysed reaction is formamide + H2O = formate + NH4(+). Functionally, is an aliphatic amidase with a restricted substrate specificity, as it only hydrolyzes formamide. The protein is Formamidase of Pseudomonas syringae pv. syringae (strain B728a).